Reading from the N-terminus, the 290-residue chain is HTH-type transcriptional activator RhaR (290 aa).

One can recognise an HTH araC/xylS-type domain in the interval 179–277 (DLIMSALQQS…GMTPRDYRQR (99 aa)). DNA-binding regions (H-T-H motif) lie at residues 196 to 217 (ADFC…RQQT) and 244 to 267 (ISDI…TREA).

As to quaternary structure, binds DNA as a dimer.

It is found in the cytoplasm. Its function is as follows. Activates expression of the rhaSR operon in response to L-rhamnose. In Yersinia pseudotuberculosis serotype O:1b (strain IP 31758), this protein is HTH-type transcriptional activator RhaR.